Here is a 127-residue protein sequence, read N- to C-terminus: uncharacterized protein (127 aa).

This is an uncharacterized protein from Acidianus two-tailed virus (ATV).